The chain runs to 320 residues: Aminoacyl tRNA synthase complex-interacting multifunctional protein 2 (320 aa).

The tract at residues 31–51 (HSKTTSPATDAGHVQEPSEPS) is disordered. A Phosphoserine modification is found at Ser36. Residues 82 to 162 (TPDADLDVTN…HTHSSVKNVP (81 aa)) form an interaction with PRKN region. Positions 162-225 (PENLLKCFGE…FLFSLFGQKH (64 aa)) are interaction with TP53. In terms of domain architecture, GST C-terminal spans 220 to 317 (LFGQKHNAVH…NLAPFSTALQ (98 aa)).

In terms of assembly, part of the multisynthetase complex (MSC), a multisubunit complex that groups tRNA ligases for Arg (RARS1), Asp (DARS1), Gln (QARS1), Ile (IARS1), Leu (LARS1), Lys (KARS1), Met (MARS1) the bifunctional ligase for Glu and Pro (EPRS1) and the auxiliary subunits AIMP1/p43, AIMP2/p38 and EEF1E1/p18. Interacts (via N-terminus) with KARS1. Interacts with EPRS1. Forms a linear complex that contains MARS1, EEF1E1, EPRS1 and AIMP2 that is at the core of the multisubunit complex. Binds FUBP1 (via C-terminus). Interacts in both its unphosphorylated and phosphorylated forms with p53/TP53 (via N-terminus) in the nucleus following UV irradiation. Interacts (via N-terminus) with PRKN/parkin (via first RING-type domain). Interacts with TARS3. In terms of processing, phosphorylated on serine residues in response to UV irradiation. Post-translationally, ubiquitinated by PRKN, leading to its degradation by the proteasome.

It is found in the cytoplasm. The protein resides in the cytosol. The protein localises to the nucleus. In terms of biological role, required for assembly and stability of the aminoacyl-tRNA synthase complex. Mediates ubiquitination and degradation of FUBP1, a transcriptional activator of MYC, leading to MYC down-regulation which is required for aveolar type II cell differentiation. Blocks MDM2-mediated ubiquitination and degradation of p53/TP53. Functions as a proapoptotic factor. In Rattus norvegicus (Rat), this protein is Aminoacyl tRNA synthase complex-interacting multifunctional protein 2 (Aimp2).